Consider the following 111-residue polypeptide: Probable 4-amino-4-deoxy-L-arabinose-phosphoundecaprenol flippase subunit ArnE (111 aa).

At 1-35 (MIWLTLVFASLLSVAGQLCQKQATCFATVNKRRKH) the chain is on the cytoplasmic side. The helical transmembrane segment at 36 to 56 (IVLWLGLALACLGLAMVLWLL) threads the bilayer. Positions 40-109 (LGLALACLGL…IIGGIVILGS (70 aa)) constitute an EamA domain. Residues 57–60 (VLQN) lie on the Periplasmic side of the membrane. Residues 61–81 (VPVGIAYPMLSLNFVWVTLAA) traverse the membrane as a helical segment. Topologically, residues 82–87 (VKLWHE) are cytoplasmic. Residues 88-108 (PVSLRHWCGVAFIIGGIVILG) form a helical membrane-spanning segment. The Periplasmic portion of the chain corresponds to 109 to 111 (STV).

Belongs to the ArnE family. In terms of assembly, heterodimer of ArnE and ArnF.

The protein localises to the cell inner membrane. It functions in the pathway bacterial outer membrane biogenesis; lipopolysaccharide biosynthesis. Translocates 4-amino-4-deoxy-L-arabinose-phosphoundecaprenol (alpha-L-Ara4N-phosphoundecaprenol) from the cytoplasmic to the periplasmic side of the inner membrane. The sequence is that of Probable 4-amino-4-deoxy-L-arabinose-phosphoundecaprenol flippase subunit ArnE from Escherichia coli O6:H1 (strain CFT073 / ATCC 700928 / UPEC).